A 469-amino-acid chain; its full sequence is 3-isopropylmalate dehydratase large subunit (469 aa).

[4Fe-4S] cluster-binding residues include Cys347, Cys410, and Cys413.

The protein belongs to the aconitase/IPM isomerase family. LeuC type 1 subfamily. As to quaternary structure, heterodimer of LeuC and LeuD. Requires [4Fe-4S] cluster as cofactor.

The enzyme catalyses (2R,3S)-3-isopropylmalate = (2S)-2-isopropylmalate. Its pathway is amino-acid biosynthesis; L-leucine biosynthesis; L-leucine from 3-methyl-2-oxobutanoate: step 2/4. In terms of biological role, catalyzes the isomerization between 2-isopropylmalate and 3-isopropylmalate, via the formation of 2-isopropylmaleate. This Ralstonia nicotianae (strain ATCC BAA-1114 / GMI1000) (Ralstonia solanacearum) protein is 3-isopropylmalate dehydratase large subunit.